Consider the following 203-residue polypeptide: Outer-membrane lipoprotein carrier protein (203 aa).

Residues 1-21 (MKKIAITCALLSSLVASSVWA) form the signal peptide.

Belongs to the LolA family. Monomer.

Its subcellular location is the periplasm. Participates in the translocation of lipoproteins from the inner membrane to the outer membrane. Only forms a complex with a lipoprotein if the residue after the N-terminal Cys is not an aspartate (The Asp acts as a targeting signal to indicate that the lipoprotein should stay in the inner membrane). The sequence is that of Outer-membrane lipoprotein carrier protein from Escherichia coli O139:H28 (strain E24377A / ETEC).